We begin with the raw amino-acid sequence, 226 residues long: Ribosome maturation factor RimM (226 aa).

The 82-residue stretch at Ala-144–Tyr-225 folds into the PRC barrel domain.

Belongs to the RimM family. Binds ribosomal protein uS19.

The protein resides in the cytoplasm. Functionally, an accessory protein needed during the final step in the assembly of 30S ribosomal subunit, possibly for assembly of the head region. Essential for efficient processing of 16S rRNA. May be needed both before and after RbfA during the maturation of 16S rRNA. It has affinity for free ribosomal 30S subunits but not for 70S ribosomes. The polypeptide is Ribosome maturation factor RimM (Burkholderia ambifaria (strain ATCC BAA-244 / DSM 16087 / CCUG 44356 / LMG 19182 / AMMD) (Burkholderia cepacia (strain AMMD))).